A 94-amino-acid polypeptide reads, in one-letter code: Co-chaperonin GroES (94 aa).

Belongs to the GroES chaperonin family. As to quaternary structure, heptamer of 7 subunits arranged in a ring. Interacts with the chaperonin GroEL.

Its subcellular location is the cytoplasm. Together with the chaperonin GroEL, plays an essential role in assisting protein folding. The GroEL-GroES system forms a nano-cage that allows encapsulation of the non-native substrate proteins and provides a physical environment optimized to promote and accelerate protein folding. GroES binds to the apical surface of the GroEL ring, thereby capping the opening of the GroEL channel. This chain is Co-chaperonin GroES, found in Enterococcus faecalis (strain ATCC 700802 / V583).